Reading from the N-terminus, the 407-residue chain is Peptidase T (407 aa).

H82 is a binding site for Zn(2+). The active site involves D84. D143 contributes to the Zn(2+) binding site. E177 functions as the Proton acceptor in the catalytic mechanism. Positions 178, 200, and 382 each coordinate Zn(2+).

Belongs to the peptidase M20B family. Zn(2+) serves as cofactor.

Its subcellular location is the cytoplasm. It carries out the reaction Release of the N-terminal residue from a tripeptide.. Its function is as follows. Cleaves the N-terminal amino acid of tripeptides. In Streptococcus pyogenes serotype M49 (strain NZ131), this protein is Peptidase T.